A 373-amino-acid chain; its full sequence is Zinc finger protein CONSTANS-LIKE 10 (373 aa).

Positions 5, 8, 28, 33, 48, 51, 71, and 76 each coordinate Zn(2+). The segment at 5-47 (CDFCGEQRSMVYCRSDAACLCLSCDRNVHSANALSKRHSRTLV) adopts a B box-type 1; atypical zinc-finger fold. The B box-type 2; atypical zinc-finger motif lies at 48–92 (CERCNAQPASVRCSDERVSLCQNCDWSGHDGKNSTTTSHHKRQTI). The disordered stretch occupies residues 152-172 (PETSSAAQGMDHSSVPENSSM). Residues 316–358 (RNNAVMRYKEKKKARKFDKRVRYVSRKERADVRRRVKGRFVKS) form the CCT domain.

The protein belongs to the CONSTANS family.

It localises to the nucleus. This is Zinc finger protein CONSTANS-LIKE 10 (COL10) from Arabidopsis thaliana (Mouse-ear cress).